The primary structure comprises 332 residues: Biotin synthase (332 aa).

In terms of domain architecture, Radical SAM core spans 46-275 (SDIQRASLLS…RARVRLSAGR (230 aa)). Residues Cys-61, Cys-65, and Cys-68 each contribute to the [4Fe-4S] cluster site. [2Fe-2S] cluster is bound by residues Cys-106, Cys-138, Cys-198, and Arg-270.

This sequence belongs to the radical SAM superfamily. Biotin synthase family. Homodimer. The cofactor is [4Fe-4S] cluster. [2Fe-2S] cluster serves as cofactor.

It carries out the reaction (4R,5S)-dethiobiotin + (sulfur carrier)-SH + 2 reduced [2Fe-2S]-[ferredoxin] + 2 S-adenosyl-L-methionine = (sulfur carrier)-H + biotin + 2 5'-deoxyadenosine + 2 L-methionine + 2 oxidized [2Fe-2S]-[ferredoxin]. The protein operates within cofactor biosynthesis; biotin biosynthesis; biotin from 7,8-diaminononanoate: step 2/2. Functionally, catalyzes the conversion of dethiobiotin (DTB) to biotin by the insertion of a sulfur atom into dethiobiotin via a radical-based mechanism. In Methylobacterium sp. (strain 4-46), this protein is Biotin synthase.